The chain runs to 1130 residues: BTB/POZ domain-containing protein 7 (1130 aa).

Residues 1-10 (MGANASNYPH) show a composition bias toward polar residues. The segment at 1-24 (MGANASNYPHSCSPRVGGNSQAQQ) is disordered. G2 carries N-myristoyl glycine lipidation. BTB domains lie at 142-211 (TDVD…GMED) and 247-341 (YDVV…DLSV). One can recognise a BACK domain in the interval 413 to 479 (YGSKWVHRQA…WGEHQLMKRI (67 aa)). S722 carries the post-translational modification Phosphoserine. Disordered stretches follow at residues 898–1050 (SEAG…PAHV) and 1062–1130 (FGLT…KSAL). Basic and acidic residues-rich tracts occupy residues 923–935 (PTLE…RENQ) and 996–1005 (KKQEDPRREY). The residue at position 1008 (S1008) is a Phosphoserine. The span at 1063–1075 (GLTSNRPPSHSAC) shows a compositional bias: polar residues. 2 stretches are compositionally biased toward basic and acidic residues: residues 1080-1090 (LEERSSRRLTD) and 1101-1112 (RNADLERGDSIS).

Specifically expressed in embryonic epithelia.

The protein resides in the nucleus. Its function is as follows. Acts as a mediator of epithelial dynamics and organ branching by promoting cleft progression. Induced following accumulation of fibronectin in forming clefts, leading to local expression of the cell-scattering SNAIL2 and suppression of E-cadherin levels, thereby altering cell morphology and reducing cell-cell adhesion. This stimulates cell separation at the base of forming clefts by local, dynamic intercellular gap formation and promotes cleft progression. This Mus musculus (Mouse) protein is BTB/POZ domain-containing protein 7 (Btbd7).